The following is a 159-amino-acid chain: MNRVIYPGTFDPITKGHGDLVERAAKLFDHVIIAVAASPKKNPLFSLDKRVELAREVTRHLPNVEVLGFSSLLAQFAREQKANALLRGLRAVSDFEYEFQLANMNRQLAPEVESLFLTPSEKYSYISSTLVREIAALGGNIEQFVHPAVADALRERFRA.

Residue Thr9 participates in substrate binding. ATP-binding positions include 9-10 (TF) and His17. Lys41, Leu73, and Arg87 together coordinate substrate. ATP-binding positions include 88–90 (GLR), Glu98, and 123–129 (YSYISST).

It belongs to the bacterial CoaD family. In terms of assembly, homohexamer. It depends on Mg(2+) as a cofactor.

The protein localises to the cytoplasm. The enzyme catalyses (R)-4'-phosphopantetheine + ATP + H(+) = 3'-dephospho-CoA + diphosphate. Its pathway is cofactor biosynthesis; coenzyme A biosynthesis; CoA from (R)-pantothenate: step 4/5. In terms of biological role, reversibly transfers an adenylyl group from ATP to 4'-phosphopantetheine, yielding dephospho-CoA (dPCoA) and pyrophosphate. The polypeptide is Phosphopantetheine adenylyltransferase (Azotobacter vinelandii (strain DJ / ATCC BAA-1303)).